We begin with the raw amino-acid sequence, 251 residues long: Flap endonuclease Xni (251 aa).

The tract at residues 51–72 (EDDRSDSWRHQSLPDYKAGRSP) is disordered. Aspartate 104 provides a ligand contact to Mg(2+). One can recognise a 5'-3' exonuclease domain in the interval 160 to 249 (VLPHQLPDYW…LSGNLQQLRL (90 aa)). K(+) contacts are provided by leucine 171, alanine 172, proline 180, valine 182, and isoleucine 185. Residues 184 to 189 (GIGAKT) form an interaction with DNA region.

This sequence belongs to the Xni family. It depends on Mg(2+) as a cofactor. Requires K(+) as cofactor.

Has flap endonuclease activity. During DNA replication, flap endonucleases cleave the 5'-overhanging flap structure that is generated by displacement synthesis when DNA polymerase encounters the 5'-end of a downstream Okazaki fragment. This Yersinia enterocolitica serotype O:8 / biotype 1B (strain NCTC 13174 / 8081) protein is Flap endonuclease Xni.